Reading from the N-terminus, the 325-residue chain is Replication factor C small subunit (325 aa).

Residue 54-61 (GPAGTGKT) participates in ATP binding.

Belongs to the activator 1 small subunits family. RfcS subfamily. Heteromultimer composed of small subunits (RfcS) and large subunits (RfcL).

In terms of biological role, part of the RFC clamp loader complex which loads the PCNA sliding clamp onto DNA. The polypeptide is Replication factor C small subunit (Haloarcula marismortui (strain ATCC 43049 / DSM 3752 / JCM 8966 / VKM B-1809) (Halobacterium marismortui)).